The following is a 332-amino-acid chain: D-lactate dehydrogenase (332 aa).

NAD(+) is bound by residues 155–156 (RI), Asp175, 206–207 (VP), Asn212, 233–235 (FAR), and Asp259. Arg235 is a catalytic residue. The active site involves Glu264. His296 (proton donor) is an active-site residue.

The protein belongs to the D-isomer specific 2-hydroxyacid dehydrogenase family.

The catalysed reaction is (R)-lactate + NAD(+) = pyruvate + NADH + H(+). This is D-lactate dehydrogenase (ldhD) from Lactiplantibacillus plantarum (strain ATCC BAA-793 / NCIMB 8826 / WCFS1) (Lactobacillus plantarum).